A 175-amino-acid chain; its full sequence is Sec-independent protein translocase protein TatB (175 aa).

A helical membrane pass occupies residues 1 to 21; the sequence is MLDLGLSKMALIGVVALVVLG. The segment covering 99 to 115 has biased composition (low complexity); it reads GDPAAADASGGLGATSD. The segment at 99–118 is disordered; sequence GDPAAADASGGLGATSDEPS.

Belongs to the TatB family. The Tat system comprises two distinct complexes: a TatABC complex, containing multiple copies of TatA, TatB and TatC subunits, and a separate TatA complex, containing only TatA subunits. Substrates initially bind to the TatABC complex, which probably triggers association of the separate TatA complex to form the active translocon.

The protein resides in the cell inner membrane. Its function is as follows. Part of the twin-arginine translocation (Tat) system that transports large folded proteins containing a characteristic twin-arginine motif in their signal peptide across membranes. Together with TatC, TatB is part of a receptor directly interacting with Tat signal peptides. TatB may form an oligomeric binding site that transiently accommodates folded Tat precursor proteins before their translocation. The sequence is that of Sec-independent protein translocase protein TatB from Burkholderia thailandensis (strain ATCC 700388 / DSM 13276 / CCUG 48851 / CIP 106301 / E264).